We begin with the raw amino-acid sequence, 396 residues long: Elongation factor Tu (396 aa).

Residues 10-206 (KPHCNIGTIG…AVDAYIPQPE (197 aa)) form the tr-type G domain. The G1 stretch occupies residues 19-26 (GHVDHGKT). 19 to 26 (GHVDHGKT) contributes to the GTP binding site. Threonine 26 is a Mg(2+) binding site. The tract at residues 60 to 64 (GITIS) is G2. The segment at 81–84 (DCPG) is G3. GTP contacts are provided by residues 81–85 (DCPGH) and 136–139 (NKVD). Residues 136 to 139 (NKVD) form a G4 region. Residues 174–176 (SAL) form a G5 region.

It belongs to the TRAFAC class translation factor GTPase superfamily. Classic translation factor GTPase family. EF-Tu/EF-1A subfamily. As to quaternary structure, monomer.

The protein resides in the cytoplasm. It carries out the reaction GTP + H2O = GDP + phosphate + H(+). In terms of biological role, GTP hydrolase that promotes the GTP-dependent binding of aminoacyl-tRNA to the A-site of ribosomes during protein biosynthesis. The protein is Elongation factor Tu of Parvibaculum lavamentivorans (strain DS-1 / DSM 13023 / NCIMB 13966).